Here is a 448-residue protein sequence, read N- to C-terminus: Ribosomal protein uS12 methylthiotransferase RimO (448 aa).

The MTTase N-terminal domain maps to 7–123 (EKVSLVSLGC…IAEIIAEKEG (117 aa)). [4Fe-4S] cluster is bound by residues Cys16, Cys52, Cys86, Cys161, Cys165, and Cys168. One can recognise a Radical SAM core domain in the interval 147–377 (SSPYYTAYLK…MRTQARVSFK (231 aa)). Residues 380–448 (RSLVDTEELV…DYDLIGEIVP (69 aa)) enclose the TRAM domain.

This sequence belongs to the methylthiotransferase family. RimO subfamily. [4Fe-4S] cluster serves as cofactor.

It localises to the cytoplasm. The catalysed reaction is L-aspartate(89)-[ribosomal protein uS12]-hydrogen + (sulfur carrier)-SH + AH2 + 2 S-adenosyl-L-methionine = 3-methylsulfanyl-L-aspartate(89)-[ribosomal protein uS12]-hydrogen + (sulfur carrier)-H + 5'-deoxyadenosine + L-methionine + A + S-adenosyl-L-homocysteine + 2 H(+). In terms of biological role, catalyzes the methylthiolation of an aspartic acid residue of ribosomal protein uS12. This chain is Ribosomal protein uS12 methylthiotransferase RimO, found in Geotalea uraniireducens (strain Rf4) (Geobacter uraniireducens).